A 414-amino-acid chain; its full sequence is Tar DNA-binding protein homolog 1 (414 aa).

2 stretches are compositionally biased toward basic and acidic residues: residues 1–44 (MADE…KTTD) and 153–167 (DDGRDGRSGRKRAVE). Disordered regions lie at residues 1-58 (MADE…GDEP) and 132-167 (SSADATSAKRRKVGSSDDSDSDDGRDGRSGRKRAVE). 2 RRM domains span residues 173 to 259 (VDLI…QGRP) and 262 to 341 (SRIF…IAQP). A disordered region spans residues 343-414 (EENNQSVGPD…APGDSRGPGW (72 aa)). The span at 361-373 (NRRERDRPDRRPI) shows a compositional bias: basic and acidic residues.

As to quaternary structure, interacts with chromobox protein homolog hpl-2; interaction may maintain localization of hpl-2 to gene bodies. In terms of tissue distribution, widely expressed in a range of tissues including body wall muscles, pharynx and neurons of the midbody in adults and larvae.

The protein resides in the nucleus. It is found in the cytoplasm. RNA-binding protein which regulates transcription, splicing and RNA-editing. Limits the accumulation of double-stranded RNA by maintaining the abundance of the mature RNA transcripts that are formed from double-stranded precursor RNAs. Stress response protein that acts downstream of daf-16 in the insulin/IGF pathway to regulate longevity and the cellular stress response to osmotic, oxidative, proteotoxic and endoplasmic reticulum stress. Involved in the regulation of physiological processes including aging, fertility, growth and locomotion. Plays a role in maintaining localization of chromobox protein homolog hpl-2 to gene bodies, perhaps acting via binding to nascent RNA transcripts. The protein is Tar DNA-binding protein homolog 1 of Caenorhabditis elegans.